Reading from the N-terminus, the 260-residue chain is Late transcription factor 1 (260 aa).

Belongs to the chordopoxvirinae VLTF-1 family. In terms of assembly, interacts with the late transcription factors VLTF-2 and VLTF-3. Interacts with the late transcription elongation factor VLTF-4. Interacts with itself.

Associates with RNA polymerase to initiate transcription from late gene promoters. The sequence is that of Late transcription factor 1 (OPG093) from Homo sapiens (Human).